A 229-amino-acid chain; its full sequence is Translin (229 aa).

Positions 86–90 (RFHEH) are DNA/RNA binding. The tract at residues 177–198 (LDSGFRLLNLKNDSLRKRYDGL) is leucine-zipper.

Belongs to the translin family. As to quaternary structure, ring-shaped heterooctamer of six TSN and two TSNAX subunits, DNA/RNA binding occurs inside the ring.

The protein resides in the cytoplasm. Its subcellular location is the nucleus. Its function is as follows. Exhibits both single-stranded and double-stranded endoribonuclease activity. May act as an activator of RNA-induced silencing complex (RISC) by facilitating endonucleolytic cleavage of the siRNA passenger strand. DNA-binding protein that specifically recognizes consensus sequences at the breakpoint junctions in chromosomal translocations, mostly involving immunoglobulin (Ig)/T-cell receptor gene segments. Seems to recognize single-stranded DNA ends generated by staggered breaks occurring at recombination hot spots. The protein is Translin (TSN) of Gallus gallus (Chicken).